Consider the following 224-residue polypeptide: Cerebellin-2 (224 aa).

Residues 1–51 (MPAPGQGPRGPLLSMPGRRGALREPADFGSSLGAVLALLLLLLPACCPVRA) form the signal peptide. N-linked (GlcNAc...) asparagine glycans are attached at residues N53 and N110. Positions 88-224 (SGSAKVAFSA…TFSGFLVFPL (137 aa)) constitute a C1q domain.

In terms of assembly, homohexamer; disulfide-linked homotrimers. The trimers are assembled via the globular C1q domains. The trimers associate via N-terminal cysteine residues to form disulfide-linked hexamers. May form homooligomers or heterooligomers with CBLN1 and CBLN3 prior to secretion. Once secreted, does not interact with other CBLN family members. Interacts with GRID2, and more weakly with GRID1. Interacts with NRXN1 and NRXN2 long and short isoforms produced by alternative promoter usage. Weakly interacts with NRXN3 short isoform and not at all with NRXN3 long isoform. Expressed in various brain regions with higher levels in the olfactory bulb, cerebral cortex, certain thalamic and hypothalamic nuclei, superior and inferior colliculi and some brainstem nuclei. Highly expressed in the dorsal medial habenula.

It is found in the secreted. Functionally, acts as a synaptic organizer in specific subsets of neurons in the brain. Essential for long-term maintenance but not establishment of excitatory synapses. Functions as part of a trans-synaptic complex by binding to postsynaptic GRID1 and presynaptic neurexins. This interaction helps regulate the activity of NMDA and AMPA receptors at hippocampal synapses without affecting synapse formation. NRXN1B-CBLN2-GRID1 complex transduce presynaptic signals into postsynaptic NMDAR response. NRXN3B-CBLN2-GRID1 complex transduce presynaptic signals into postsynaptic AMPAR response. The polypeptide is Cerebellin-2 (Cbln2) (Mus musculus (Mouse)).